Consider the following 399-residue polypeptide: Serine/threonine-protein kinase PKZ1 (399 aa).

Residues 30–50 are disordered; sequence PMQCAYQTQSHSNPEGAKRGR. The 280-residue stretch at 92–371 folds into the Protein kinase domain; the sequence is WQLFDQIGAG…ADQMLQHPWM (280 aa). Residues 98–106 and lysine 121 contribute to the ATP site; that span reads IGAGAFGVV. Catalysis depends on aspartate 219, which acts as the Proton acceptor.

The protein belongs to the protein kinase superfamily. CAMK Ser/Thr protein kinase family. Interacts with BZP1.

It catalyses the reaction L-seryl-[protein] + ATP = O-phospho-L-seryl-[protein] + ADP + H(+). The enzyme catalyses L-threonyl-[protein] + ATP = O-phospho-L-threonyl-[protein] + ADP + H(+). Functionally, may regulate an early stage of the zoospore pathway. The protein is Serine/threonine-protein kinase PKZ1 of Phytophthora infestans (Potato late blight agent).